Reading from the N-terminus, the 97-residue chain is Secreted RxLR effector protein BLR05 (97 aa).

Residues 1-21 (MGPQHLLALVVVSILVAAGNA) form the signal peptide. Residues 32–60 (RALRPSVIADQEHAVHAIPATNFISKDED) carry the RxLR-dEER motif. The helical transmembrane segment at 69–89 (IEIIRIAIFSLLVVGVFAIMA) threads the bilayer.

This sequence belongs to the RxLR effector family. Interacts with host transcription factor NAC069.

The protein localises to the secreted. Its subcellular location is the host endoplasmic reticulum membrane. In terms of biological role, secreted effector that inhibits stress-induced relocalization of the transcription factor NAC069 to the nucleus, thus affecting its broad role in abiotic and biotic stress responses. This is Secreted RxLR effector protein BLR05 from Bremia lactucae (Lettuce downy mildew).